Here is a 151-residue protein sequence, read N- to C-terminus: Ubiquitin-conjugating enzyme E2 2 (151 aa).

The tract at residues 1-26 (MSTTARRRLMRDFKRMQQDPPQGVSA) is disordered. Positions 4–150 (TARRRLMRDF…VRDTVEASWT (147 aa)) constitute a UBC core domain. The active-site Glycyl thioester intermediate is the cysteine 88.

Belongs to the ubiquitin-conjugating enzyme family.

The protein resides in the cytoplasm. Its subcellular location is the nucleus. It carries out the reaction S-ubiquitinyl-[E1 ubiquitin-activating enzyme]-L-cysteine + [E2 ubiquitin-conjugating enzyme]-L-cysteine = [E1 ubiquitin-activating enzyme]-L-cysteine + S-ubiquitinyl-[E2 ubiquitin-conjugating enzyme]-L-cysteine.. Its pathway is protein modification; protein ubiquitination. Its function is as follows. Catalyzes the covalent attachment of ubiquitin to other proteins. Plays a role in transcription regulation by catalyzing the monoubiquitination of histone H2B to form H2BK123ub1. H2BK123ub1 gives a specific tag for epigenetic transcriptional activation and is also a prerequisite for H3K4me and H3K79me formation. Also involved in postreplication repair of UV-damaged DNA, in N-end rule-dependent protein degradation and in sporulation. The chain is Ubiquitin-conjugating enzyme E2 2 (UBC2) from Yarrowia lipolytica (strain CLIB 122 / E 150) (Yeast).